A 273-amino-acid chain; its full sequence is Tryptophan synthase alpha chain (273 aa).

Catalysis depends on proton acceptor residues E49 and D60.

Belongs to the TrpA family. In terms of assembly, tetramer of two alpha and two beta chains.

It catalyses the reaction (1S,2R)-1-C-(indol-3-yl)glycerol 3-phosphate + L-serine = D-glyceraldehyde 3-phosphate + L-tryptophan + H2O. It functions in the pathway amino-acid biosynthesis; L-tryptophan biosynthesis; L-tryptophan from chorismate: step 5/5. The alpha subunit is responsible for the aldol cleavage of indoleglycerol phosphate to indole and glyceraldehyde 3-phosphate. The sequence is that of Tryptophan synthase alpha chain from Thiobacillus denitrificans (strain ATCC 25259 / T1).